A 473-amino-acid chain; its full sequence is Putative protein TIC 214 C-terminal part (473 aa).

The protein belongs to the TIC214 family. In terms of assembly, part of the Tic complex.

The protein resides in the plastid. It is found in the chloroplast. Functionally, involved in protein precursor import into chloroplasts. May be part of an intermediate translocation complex acting as a protein-conducting channel at the inner envelope. This is Putative protein TIC 214 C-terminal part from Anthoceros angustus (Hornwort).